The primary structure comprises 111 residues: Probable 4-amino-4-deoxy-L-arabinose-phosphoundecaprenol flippase subunit ArnE (111 aa).

3 helical membrane passes run 38-58 (LWLG…LLVL), 61-81 (LPVG…TLAA), and 91-111 (PRHW…GSAA). An EamA domain is found at 40-109 (LGLALICMGA…IISGIIILGS (70 aa)).

The protein belongs to the ArnE family. Heterodimer of ArnE and ArnF.

It is found in the cell inner membrane. Its pathway is bacterial outer membrane biogenesis; lipopolysaccharide biosynthesis. In terms of biological role, translocates 4-amino-4-deoxy-L-arabinose-phosphoundecaprenol (alpha-L-Ara4N-phosphoundecaprenol) from the cytoplasmic to the periplasmic side of the inner membrane. This is Probable 4-amino-4-deoxy-L-arabinose-phosphoundecaprenol flippase subunit ArnE from Salmonella heidelberg (strain SL476).